A 781-amino-acid polypeptide reads, in one-letter code: Cadherin-24 (781 aa).

The N-terminal stretch at 1 to 22 (MWGLVRLLLAWLGGWGCMGRLA) is a signal peptide. Residues 23–44 (APVPAWAGSRGHSGPTLLRTRR) constitute a propeptide that is removed on maturation. Over 45 to 603 (SWVWNQFFVI…LSPTGLSTGA (559 aa)) the chain is Extracellular. Cadherin domains follow at residues 46–150 (WVWN…PPVF), 151–259 (PLGP…PPKF), 260–374 (PQSL…PPAF), 375–479 (TQAT…APQL), and 479–592 (LAEP…WPEA). N-linked (GlcNAc...) asparagine glycans are attached at residues N446, N510, and N525. Residues 604–624 (LLAIVTCMGTLLALVVLFVAL) traverse the membrane as a helical segment. Topologically, residues 625–781 (RRQKQEALMV…LYGAKEPPAP (157 aa)) are cytoplasmic. 2 disordered regions span residues 665–700 (LQNPDGAAPPAAGPPVRRDVLPRTRAPRQPRPPGPA) and 731–762 (EGRGSSCGSLSSLGSGSEAGGVPGPAEPLDDW). Over residues 733–746 (RGSSCGSLSSLGSG) the composition is skewed to low complexity.

In terms of assembly, associates with alpha-, beta- and delta-catenins.

The protein localises to the cell membrane. Its function is as follows. Cadherins are calcium-dependent cell adhesion proteins. They preferentially interact with themselves in a homophilic manner in connecting cells; cadherins may thus contribute to the sorting of heterogeneous cell types. Cadherin-24 mediate strong cell-cell adhesion. In Mus musculus (Mouse), this protein is Cadherin-24 (Cdh24).